The following is a 372-amino-acid chain: MHKQAPIQRRKSTRIYVGNVPIGDGAPIAVQSMTNTRTTDVEATVNQIKALERVGADIVRVSVPTMDAAEAFKLIKQQVNVPLVADIHFDYRIALKVAEYGVDCLRINPGNIGNEERIRMVVDCARDKNIPIRIGVNAGSLEKDLQEKYGEPTPQALLESAMRHVDHLDRLNFDQFKVSVKASDVFLAVESYRLLAKQIDQPLHLGITEAGGARSGAVKSAIGLGLLLSEGIGDTLRVSLAADPVEEIKVGFDILKSLRIRARGINFIACPTCSRQEFDVIGTVNALEQRLEDIITPMDVSIIGCVVNGPGEALVSTLGVTGGNKKSGLYEDGVRKDRLDNDDMIAQLESRIRAKASQLDEARRIDVLQVEK.

Residues cysteine 270, cysteine 273, cysteine 305, and glutamate 312 each coordinate [4Fe-4S] cluster.

Belongs to the IspG family. [4Fe-4S] cluster is required as a cofactor.

It carries out the reaction (2E)-4-hydroxy-3-methylbut-2-enyl diphosphate + oxidized [flavodoxin] + H2O + 2 H(+) = 2-C-methyl-D-erythritol 2,4-cyclic diphosphate + reduced [flavodoxin]. The protein operates within isoprenoid biosynthesis; isopentenyl diphosphate biosynthesis via DXP pathway; isopentenyl diphosphate from 1-deoxy-D-xylulose 5-phosphate: step 5/6. Converts 2C-methyl-D-erythritol 2,4-cyclodiphosphate (ME-2,4cPP) into 1-hydroxy-2-methyl-2-(E)-butenyl 4-diphosphate. This chain is 4-hydroxy-3-methylbut-2-en-1-yl diphosphate synthase (flavodoxin), found in Salmonella gallinarum (strain 287/91 / NCTC 13346).